A 161-amino-acid chain; its full sequence is Cyclic pyranopterin monophosphate synthase (161 aa).

Substrate contacts are provided by residues 78–80 (MCH) and 116–117 (ME). Asp131 is a catalytic residue.

It belongs to the MoaC family. As to quaternary structure, homohexamer; trimer of dimers.

The catalysed reaction is (8S)-3',8-cyclo-7,8-dihydroguanosine 5'-triphosphate = cyclic pyranopterin phosphate + diphosphate. The protein operates within cofactor biosynthesis; molybdopterin biosynthesis. Catalyzes the conversion of (8S)-3',8-cyclo-7,8-dihydroguanosine 5'-triphosphate to cyclic pyranopterin monophosphate (cPMP). This chain is Cyclic pyranopterin monophosphate synthase, found in Nitratidesulfovibrio vulgaris (strain ATCC 29579 / DSM 644 / CCUG 34227 / NCIMB 8303 / VKM B-1760 / Hildenborough) (Desulfovibrio vulgaris).